The chain runs to 265 residues: Glutamate racemase (265 aa).

Residues 7-8 (DS) and 39-40 (YG) each bind substrate. C71 functions as the Proton donor/acceptor in the catalytic mechanism. Residue 72 to 73 (NT) participates in substrate binding. C184 functions as the Proton donor/acceptor in the catalytic mechanism. 185–186 (TH) provides a ligand contact to substrate.

Belongs to the aspartate/glutamate racemases family.

The enzyme catalyses L-glutamate = D-glutamate. The protein operates within cell wall biogenesis; peptidoglycan biosynthesis. Its function is as follows. Provides the (R)-glutamate required for cell wall biosynthesis. This Sulfurovum sp. (strain NBC37-1) protein is Glutamate racemase.